Reading from the N-terminus, the 445-residue chain is Arabinooligosaccharide-binding protein (445 aa).

The N-terminal stretch at 1 to 20 (MGKNILFFSFVGVMVLVLVA) is a signal peptide. Cys21 carries the N-palmitoyl cysteine lipid modification. Cys21 carries S-diacylglycerol cysteine lipidation.

Belongs to the bacterial solute-binding protein 1 family. As to quaternary structure, the complex is composed of two ATP-binding proteins (MsmX), two transmembrane proteins (AraP and AraQ) and a solute-binding protein (AraN).

The protein resides in the cell membrane. In terms of biological role, part of the ABC transporter complex AraNPQ involved in the uptake of arabinooligosaccharides. AraN captures the substrate and delivers it to the two transmembrane components. This is Arabinooligosaccharide-binding protein (araN) from Halalkalibacterium halodurans (strain ATCC BAA-125 / DSM 18197 / FERM 7344 / JCM 9153 / C-125) (Bacillus halodurans).